Here is a 1139-residue protein sequence, read N- to C-terminus: Protein kinase C-like (1139 aa).

An REM-1 1 domain is found at 1–67 (MNEDEAIQNI…LRDIQLRKVG (67 aa)). The interval 72–132 (GMSLGADDAG…PGPGAASKAR (61 aa)) is disordered. One can recognise an REM-1 2 domain in the interval 142–219 (KYDTPYLGPR…LKRYEELHVD (78 aa)). The region spanning 225-343 (AQDDDSINTP…MRRKRIEAEM (119 aa)) is the C2 domain. Residues 349 to 404 (VSADRMGSTGAPSQFPMSPTSGSFGGSPQAPGGGQGQAPGPFGDPAPQPQVVTGPI) are disordered. A compositionally biased stretch (polar residues) spans 358–368 (GAPSQFPMSPT). 2 consecutive Phorbol-ester/DAG-type zinc fingers follow at residues 454 to 502 (GHKF…VTKC) and 522 to 572 (PHRF…PDFC). Disordered regions lie at residues 590-637 (KQRQ…TPSA), 649-668 (QTSP…LSAA), and 679-804 (QGRT…TDPG). Positions 594–614 (QKTTSLSEKTLRSGATKSPTT) are enriched in polar residues. The span at 615 to 629 (AGHGSSASFSSAGAG) shows a compositional bias: low complexity. 2 stretches are compositionally biased toward pro residues: residues 723–734 (AQPPAQQRPPQP) and 743–760 (AQMP…PPQP). A compositionally biased stretch (low complexity) spans 761–793 (GQQYQQQQPAAQKPQPQPPATAQGAAAGPPGSQ). In terms of domain architecture, Protein kinase spans 814–1073 (FNFLAVLGKG…AQEVMSQPFF (260 aa)). Residues 820–828 (LGKGNFGKV) and Lys-843 each bind ATP. Catalysis depends on Asp-939, which acts as the Proton acceptor. Residues 1074–1139 (RNINWDDIYH…RGFSYTADLD (66 aa)) form the AGC-kinase C-terminal domain.

The protein belongs to the protein kinase superfamily. AGC Ser/Thr protein kinase family. PKC subfamily.

The enzyme catalyses L-seryl-[protein] + ATP = O-phospho-L-seryl-[protein] + ADP + H(+). The catalysed reaction is L-threonyl-[protein] + ATP = O-phospho-L-threonyl-[protein] + ADP + H(+). Its activity is regulated as follows. Stimulated about twofold by phospholipids or phorbol esters. In Hypocrea jecorina (Trichoderma reesei), this protein is Protein kinase C-like (pkc1).